We begin with the raw amino-acid sequence, 243 residues long: Thiamin pyrophosphokinase 1 (243 aa).

The protein belongs to the thiamine pyrophosphokinase family.

It carries out the reaction thiamine + ATP = thiamine diphosphate + AMP + H(+). Its pathway is cofactor biosynthesis; thiamine diphosphate biosynthesis; thiamine diphosphate from thiamine: step 1/1. Its function is as follows. Catalyzes the phosphorylation of thiamine to thiamine pyrophosphate. Functions cell non-autonomously. This chain is Thiamin pyrophosphokinase 1, found in Caenorhabditis elegans.